The following is a 611-amino-acid chain: L-tyrosine decarboxylase (611 aa).

Residues 151-152 (GS), Thr-292, and 382-384 (DPH) each bind pyridoxal 5'-phosphate. Position 385 is an N6-(pyridoxal phosphate)lysine (Lys-385). The Proton donor role is filled by Tyr-413. A pyridoxal 5'-phosphate-binding site is contributed by Ser-433.

The protein belongs to the group II decarboxylase family. Tyrosine decarboxylase subfamily. Homodimer. The cofactor is pyridoxal 5'-phosphate.

It catalyses the reaction L-tyrosine + H(+) = tyramine + CO2. It carries out the reaction L-dopa + H(+) = dopamine + CO2. Its pathway is amino-acid metabolism. With respect to regulation, levodopa decarboxylation is not inhibited by carbidopa, benserazide, and methyldopa, that are three human L-dopa decarboxylase inhibitors. In terms of biological role, catalyzes the decarboxylation of L-tyrosine to produce tyramine. Plays a role in acid resistance since tyramine production via tyrosine decarboxylation appears to provide a cytosolic pH maintenance mechanism that helps the bacterium cope with acid stress such as that encountered in gastrointestinal tract (GIT) environments. Therefore, may contribute to the colonization of the human GIT by E.faecium. Also involved in drug metabolism, being able to catalyze decarboxylation of levodopa (L-dopa) to dopamine. In gut microbiota this enzyme is in fact exclusively responsible for the decarboxylation of levodopa, and thus reduces in situ levels of levodopa in the treatment of Parkinson's disease. It was shown that abundance of bacterial tyrosine decarboxylase in the proximal small intestine - the primary site of levodopa absorption - contributes to interindividual variation in drug efficacy and can explain the requirement for an increased dosage regimen of levodopa treatment in Parkinson's disease patients. This Enterococcus faecium (Streptococcus faecium) protein is L-tyrosine decarboxylase.